Consider the following 130-residue polypeptide: Calcitonin gene-related peptide 2 (130 aa).

The first 26 residues, 1 to 26 (MDFWKFFPFLALSTIWVLCLASSLQA), serve as a signal peptide directing secretion. Positions 27–82 (APFRSALESSLDLGTLGDQEKHLLLAALMQDYEQMKARKLEQEEQETKGSRVTAQK) are excised as a propeptide. Cysteine 85 and cysteine 90 are disulfide-bonded. Phenylalanine 120 is modified (phenylalanine amide). Positions 127–130 (DLQA) are excised as a propeptide.

The protein belongs to the calcitonin family. In terms of tissue distribution, detected in nerve cells of cerebrum, hippocampus and pons/midbrain in newborns, and only in nerve cells of pons/midbrain in adult.

Its subcellular location is the secreted. CALCB/CGRP2 is a peptide hormone that induces vasodilation mediated by the CALCRL-RAMP1 receptor complex. Dilates a variety of vessels including the coronary, cerebral and systemic vasculature. Its abundance in the CNS also points toward a neurotransmitter or neuromodulator role. This chain is Calcitonin gene-related peptide 2, found in Mus musculus (Mouse).